Consider the following 421-residue polypeptide: Imidazolonepropionase (421 aa).

Fe(3+) contacts are provided by histidine 81 and histidine 83. Residues histidine 81 and histidine 83 each coordinate Zn(2+). Residues arginine 90, tyrosine 153, and histidine 186 each coordinate 4-imidazolone-5-propanoate. Position 153 (tyrosine 153) interacts with N-formimidoyl-L-glutamate. Histidine 251 lines the Fe(3+) pocket. Histidine 251 provides a ligand contact to Zn(2+). Glutamate 254 is a binding site for 4-imidazolone-5-propanoate. Aspartate 326 contributes to the Fe(3+) binding site. Aspartate 326 is a Zn(2+) binding site. 2 residues coordinate N-formimidoyl-L-glutamate: asparagine 328 and glycine 330. Residue serine 331 participates in 4-imidazolone-5-propanoate binding.

Belongs to the metallo-dependent hydrolases superfamily. HutI family. Zn(2+) is required as a cofactor. Fe(3+) serves as cofactor.

The protein resides in the cytoplasm. The enzyme catalyses 4-imidazolone-5-propanoate + H2O = N-formimidoyl-L-glutamate. The protein operates within amino-acid degradation; L-histidine degradation into L-glutamate; N-formimidoyl-L-glutamate from L-histidine: step 3/3. Functionally, catalyzes the hydrolytic cleavage of the carbon-nitrogen bond in imidazolone-5-propanoate to yield N-formimidoyl-L-glutamate. It is the third step in the universal histidine degradation pathway. The polypeptide is Imidazolonepropionase (Streptococcus pyogenes serotype M3 (strain SSI-1)).